Here is a 760-residue protein sequence, read N- to C-terminus: Transglutaminase-activating metalloprotease (760 aa).

The signal sequence occupies residues 1 to 33; that stretch reads MRPTPQRRAVATGALVAVTAMLAVGVQTTSANA. Disordered regions lie at residues 32–59 and 228–265; these read NAGQ…PVKL and KQGT…KTYN. Residues 34-229 constitute a propeptide that is removed on maturation; that stretch reads GQDKAAHPAP…KLFEFQGVKQ (196 aa). Residues 228 to 257 show a composition bias toward polar residues; it reads KQGTGNSQHSGQVQIGTTKSGSSYQMNDTT. His366 contacts Zn(2+). Glu367 is a catalytic residue. His370 and Glu390 together coordinate Zn(2+). The Proton donor role is filled by His454. Residues 640–760 form the P/Homo B domain; it reads TVNTTGGGSV…GTIDKWRLTF (121 aa).

This sequence belongs to the peptidase M4 family. The cofactor is Zn(2+).

The protein localises to the secreted. Its function is as follows. Cleaves the N-terminal propeptide of transglutaminase thus activating it. The protein is Transglutaminase-activating metalloprotease of Streptomyces mobaraensis (Streptoverticillium mobaraense).